A 142-amino-acid chain; its full sequence is Large ribosomal subunit protein uL11 (142 aa).

It belongs to the universal ribosomal protein uL11 family. Part of the ribosomal stalk of the 50S ribosomal subunit. Interacts with L10 and the large rRNA to form the base of the stalk. L10 forms an elongated spine to which L12 dimers bind in a sequential fashion forming a multimeric L10(L12)X complex. One or more lysine residues are methylated.

Its function is as follows. Forms part of the ribosomal stalk which helps the ribosome interact with GTP-bound translation factors. This is Large ribosomal subunit protein uL11 from Shewanella halifaxensis (strain HAW-EB4).